A 46-amino-acid polypeptide reads, in one-letter code: Mu-segestritoxin-Sf1c (46 aa).

4 cysteine pairs are disulfide-bonded: cysteine 3–cysteine 19, cysteine 10–cysteine 22, cysteine 18–cysteine 42, and cysteine 24–cysteine 40. The interval 31–33 is keys region for toxin activity; that stretch reads RPW.

Belongs to the neurotoxin 16 (SFI) family. As to expression, expressed by the venom gland.

The protein resides in the secreted. Its function is as follows. Insecticidal toxin. It inhibits insect voltage-gated sodium channels (Nav) by partially blocking the channel pore in DUM neurons from the American cockroach, not by acting as a gating modifier. The inhibition is only partially reversible after prolonged washout. In vivo, the toxin causes flaccid paralysis followed by death when injected into Heliothis virescens larvae. It also causes uncoordinated movements followed by full paralysis to sheep blowflies (Lucilia cuprina). When the toxin is fused to snowdrop lectin, it is orally active against larvae of the tomato moth (Laconobia oleracea), the rice brown planthopper (Nilaparvata lugens), and the peach-potato aphid (Myzus persicae). This Segestria florentina (Tube-web spider) protein is Mu-segestritoxin-Sf1c.